The primary structure comprises 228 residues: Protein N-lysine methyltransferase METTL21D (228 aa).

N-acetylalanine is present on A2. S-adenosyl-L-methionine contacts are provided by residues W43, 75–77 (GSG), D96, W126, A142, and Y147.

The protein belongs to the methyltransferase superfamily. METTL21 family. As to quaternary structure, interacts with ALKBH6. Interacts with ASPSCR1 and UBXN6; interaction with ASPSCR1, but not with UBXN6, enhances VCP methylation. As to expression, widely expressed.

It localises to the cytoplasm. The catalysed reaction is L-lysyl-[protein] + 3 S-adenosyl-L-methionine = N(6),N(6),N(6)-trimethyl-L-lysyl-[protein] + 3 S-adenosyl-L-homocysteine + 3 H(+). In terms of biological role, protein N-lysine methyltransferase that specifically trimethylates 'Lys-315' of VCP/p97; this modification may decrease VCP ATPase activity. This Mus musculus (Mouse) protein is Protein N-lysine methyltransferase METTL21D (Vcpkmt).